The sequence spans 206 residues: Large ribosomal subunit protein uL4 (206 aa).

Belongs to the universal ribosomal protein uL4 family. As to quaternary structure, part of the 50S ribosomal subunit.

Its function is as follows. One of the primary rRNA binding proteins, this protein initially binds near the 5'-end of the 23S rRNA. It is important during the early stages of 50S assembly. It makes multiple contacts with different domains of the 23S rRNA in the assembled 50S subunit and ribosome. In terms of biological role, forms part of the polypeptide exit tunnel. The sequence is that of Large ribosomal subunit protein uL4 from Bradyrhizobium sp. (strain BTAi1 / ATCC BAA-1182).